Consider the following 837-residue polypeptide: Zinc fingers and homeoboxes protein 2 (837 aa).

The interval Met-1–Asp-41 is disordered. Residues Val-27–Gly-77 form an interaction with EFNB1 region. Thr-37 bears the Phosphothreonine mark. Residue Lys-64 forms a Glycyl lysine isopeptide (Lys-Gly) (interchain with G-Cter in SUMO2) linkage. 2 consecutive C2H2-type zinc fingers follow at residues Tyr-78 to His-101 and Tyr-110 to His-133. A compositionally biased stretch (low complexity) spans Thr-167 to Ser-180. A disordered region spans residues Thr-167–Pro-203. Residues Pro-192–Pro-203 show a composition bias toward basic and acidic residues. Positions Asp-195 to Thr-358 are required for homodimerization. 4 DNA-binding regions (homeobox) span residues Asn-263–Glu-324, Thr-439–Ile-501, Pro-530–Val-591, and Ser-628–Trp-690. A required for repressor activity region spans residues Asn-263–Lys-446. The interval Asn-263 to Gly-497 is required for interaction with NFYA. Positions His-317 to Lys-446 are required for nuclear localization. Residues Gly-404 to Lys-445 are disordered. Positions Pro-427–Thr-439 are enriched in pro residues. Lys-455 participates in a covalent cross-link: Glycyl lysine isopeptide (Lys-Gly) (interchain with G-Cter in SUMO2). Residues Glu-754–Ala-837 form a disordered region. Ser-825 and Ser-827 each carry phosphoserine.

The protein belongs to the ZHX family. In terms of assembly, homodimer (via homeobox domain 1). Heterodimer with ZHX1 (via homeobox domain 1). Heterodimer with ZHX3 (via homeobox domain 1). Heterodimerization with ZHX1 is not necessary for repressor activity. Interacts (via homeobox domain) with NFYA (via N-terminus). Interacts with EFNB1 intracellular domain peptide; the interaction enhances ZHX2 transcriptional repression activity.

It localises to the nucleus. Its function is as follows. Acts as a transcriptional repressor. Represses the promoter activity of the CDC25C gene stimulated by NFYA. May play a role in retinal development where it regulates the composition of bipolar cell populations, by promoting differentiation of bipolar OFF-type cells. In the brain, may promote maintenance and suppress differentiation of neural progenitor cells in the developing cortex. In Pongo abelii (Sumatran orangutan), this protein is Zinc fingers and homeoboxes protein 2 (ZHX2).